A 214-amino-acid polypeptide reads, in one-letter code: Vascular endothelial growth factor A (214 aa).

The N-terminal stretch at 1–26 (MNFLLSWVHWTLALLLYLHHAKWSQA) is a signal peptide. Cystine bridges form between cysteine 51–cysteine 93, cysteine 82–cysteine 127, and cysteine 86–cysteine 129. N-linked (GlcNAc...) asparagine glycosylation occurs at asparagine 100. Positions 131-142 (PKKDRTKPEKKS) are enriched in basic and acidic residues. Residues 131 to 159 (PKKDRTKPEKKSVRGKGKGQKRKRKKSRF) are disordered. Positions 143–159 (VRGKGKGQKRKRKKSRF) are enriched in basic residues.

Belongs to the PDGF/VEGF growth factor family. As to quaternary structure, homodimer; disulfide-linked. Also found as heterodimer with PGF. Interacts with NRP1. Interacts with isoform 2 of BSG. Interacts with CD82; this interaction inhibits VEGFA-mediated signaling pathway. In terms of tissue distribution, expressed in the pituitary, in brain, in particularly in supraoptic and paraventricular nuclei and the choroid plexus. Also found abundantly in the corpus luteum of the ovary and in kidney glomeruli. Expressed in the ductal epithelial cells of post-pubertal mammary glands. Expressed in the ductal and alveolar epithelial cells throughout the whole period of gestational evolution, lactation and involution.

Its subcellular location is the secreted. Functionally, growth factor active in angiogenesis, vasculogenesis and endothelial cell growth. Induces endothelial cell proliferation, promotes cell migration, inhibits apoptosis and induces permeabilization of blood vessels. Binds to the FLT1/VEGFR1 and KDR/VEGFR2 receptors, heparan sulfate and heparin. May play a role in increasing vascular permeability during lactation, when increased transport of molecules from the blood is required for efficient milk protein synthesis. Binding to NRP1 receptor initiates a signaling pathway needed for motor neuron axon guidance and cell body migration, including for the caudal migration of facial motor neurons from rhombomere 4 to rhombomere 6 during embryonic development. Also binds the DEAR/FBXW7-AS1 receptor. The protein is Vascular endothelial growth factor A (Vegfa) of Rattus norvegicus (Rat).